Here is a 201-residue protein sequence, read N- to C-terminus: Translation initiation factor IF-3 (201 aa).

It belongs to the IF-3 family. As to quaternary structure, monomer.

It is found in the cytoplasm. In terms of biological role, IF-3 binds to the 30S ribosomal subunit and shifts the equilibrium between 70S ribosomes and their 50S and 30S subunits in favor of the free subunits, thus enhancing the availability of 30S subunits on which protein synthesis initiation begins. This Prochlorococcus marinus (strain SARG / CCMP1375 / SS120) protein is Translation initiation factor IF-3.